The primary structure comprises 799 residues: Cadherin-8 (799 aa).

An N-terminal signal peptide occupies residues 1-29; sequence MPERLAEMLLDLWTPLIILWITLPPCIYM. The propeptide occupies 30–61; it reads APMNQSQVLMSGSPLELNSLGEEQRILNRSKR. 2 N-linked (GlcNAc...) asparagine glycosylation sites follow: Asn33 and Asn57. Cadherin domains follow at residues 62–167, 168–276, 277–391, 392–494, and 495–616; these read GWVW…APEF, LNGP…PPKF, AQSL…PPVF, SSPT…DNAP, and EFAS…YVLP. Over 62 to 621 the chain is Extracellular; it reads GWVWNQMFVL…AYVLPIGLSM (560 aa). The N-linked (GlcNAc...) asparagine glycan is linked to Asn188. Residues Asn463, Asn473, and Asn544 are each glycosylated (N-linked (GlcNAc...) asparagine). The chain crosses the membrane as a helical span at residues 622 to 642; sequence GALIAILACIILLLVIVVLFV. At 643-799 the chain is on the cytoplasmic side; the sequence is TLRRHKNEPL…YSVGESDKET (157 aa). Ser795 bears the Phosphoserine mark.

Mainly expressed in brain. Found in certain nerve cell lines, such as retinoblasts, glioma cells and neuroblasts.

It is found in the cell membrane. Cadherins are calcium-dependent cell adhesion proteins. They preferentially interact with themselves in a homophilic manner in connecting cells; cadherins may thus contribute to the sorting of heterogeneous cell types. This chain is Cadherin-8 (CDH8), found in Homo sapiens (Human).